The primary structure comprises 550 residues: Hydroxylamine reductase (550 aa).

Residues C3, C6, C18, and C25 each contribute to the [2Fe-2S] cluster site. Residues H249, E273, C317, C405, C433, C458, E492, and K494 each coordinate hybrid [4Fe-2O-2S] cluster. C405 carries the post-translational modification Cysteine persulfide.

It belongs to the HCP family. Requires [2Fe-2S] cluster as cofactor. The cofactor is hybrid [4Fe-2O-2S] cluster.

It is found in the cytoplasm. It carries out the reaction A + NH4(+) + H2O = hydroxylamine + AH2 + H(+). In terms of biological role, catalyzes the reduction of hydroxylamine to form NH(3) and H(2)O. This chain is Hydroxylamine reductase, found in Salmonella typhimurium (strain LT2 / SGSC1412 / ATCC 700720).